We begin with the raw amino-acid sequence, 523 residues long: Fidgetin-like protein 1 (523 aa).

Residues 114–154 are disordered; the sequence is PVQQAVKSRPEGQFPESRNNSTKKIDAQQYSSESSSQSGFG. Residues 141 to 151 show a composition bias toward low complexity; it reads QQYSSESSSQS. ATP contacts are provided by residues Ala253 and 293–298; that span reads GTGKTL.

Belongs to the AAA ATPase family. In terms of assembly, hexamer. It depends on Mg(2+) as a cofactor.

It carries out the reaction ATP + H2O = ADP + phosphate + H(+). In Drosophila melanogaster (Fruit fly), this protein is Fidgetin-like protein 1.